The following is a 997-amino-acid chain: Phosphoenolpyruvate carboxylase (997 aa).

Residues 1 to 67 (MKSSGSARTA…KPAARTREDK (67 aa)) are disordered. Active-site residues include histidine 207 and lysine 649.

Belongs to the PEPCase type 1 family. It depends on Mg(2+) as a cofactor.

The enzyme catalyses oxaloacetate + phosphate = phosphoenolpyruvate + hydrogencarbonate. Forms oxaloacetate, a four-carbon dicarboxylic acid source for the tricarboxylic acid cycle. This is Phosphoenolpyruvate carboxylase from Burkholderia vietnamiensis (strain G4 / LMG 22486) (Burkholderia cepacia (strain R1808)).